The chain runs to 128 residues: Glycine cleavage system H protein (128 aa).

The Lipoyl-binding domain maps to 24 to 106 (LVRIGISEFA…HGEGWLLIIR (83 aa)). The residue at position 65 (lysine 65) is an N6-lipoyllysine.

This sequence belongs to the GcvH family. The glycine cleavage system is composed of four proteins: P, T, L and H. (R)-lipoate is required as a cofactor.

In terms of biological role, the glycine cleavage system catalyzes the degradation of glycine. The H protein shuttles the methylamine group of glycine from the P protein to the T protein. This chain is Glycine cleavage system H protein, found in Prochlorococcus marinus (strain NATL2A).